We begin with the raw amino-acid sequence, 301 residues long: Quinolinate synthase (301 aa).

H21 and S38 together coordinate iminosuccinate. C83 provides a ligand contact to [4Fe-4S] cluster. Residues 109 to 111 (YIN) and S126 each bind iminosuccinate. C169 provides a ligand contact to [4Fe-4S] cluster. Residues 195 to 197 (HPE) and T212 contribute to the iminosuccinate site. Residue C257 coordinates [4Fe-4S] cluster.

This sequence belongs to the quinolinate synthase family. Type 2 subfamily. [4Fe-4S] cluster is required as a cofactor.

It is found in the cytoplasm. The catalysed reaction is iminosuccinate + dihydroxyacetone phosphate = quinolinate + phosphate + 2 H2O + H(+). The protein operates within cofactor biosynthesis; NAD(+) biosynthesis; quinolinate from iminoaspartate: step 1/1. Its function is as follows. Catalyzes the condensation of iminoaspartate with dihydroxyacetone phosphate to form quinolinate. The polypeptide is Quinolinate synthase (Clostridium perfringens (strain ATCC 13124 / DSM 756 / JCM 1290 / NCIMB 6125 / NCTC 8237 / Type A)).